Consider the following 86-residue polypeptide: Allergen Hum j 3 (86 aa).

In Humulus japonicus (Japanese hop), this protein is Allergen Hum j 3.